The following is a 251-amino-acid chain: 4-hydroxy-tetrahydrodipicolinate reductase (251 aa).

NAD(+)-binding positions include 9 to 14 (GCNGKM), 85 to 87 (ATT), and 109 to 112 (SANM). His-141 functions as the Proton donor/acceptor in the catalytic mechanism. Residue His-142 coordinates (S)-2,3,4,5-tetrahydrodipicolinate. Lys-145 acts as the Proton donor in catalysis. 151-152 (GT) serves as a coordination point for (S)-2,3,4,5-tetrahydrodipicolinate.

It belongs to the DapB family.

It localises to the cytoplasm. It catalyses the reaction (S)-2,3,4,5-tetrahydrodipicolinate + NAD(+) + H2O = (2S,4S)-4-hydroxy-2,3,4,5-tetrahydrodipicolinate + NADH + H(+). The enzyme catalyses (S)-2,3,4,5-tetrahydrodipicolinate + NADP(+) + H2O = (2S,4S)-4-hydroxy-2,3,4,5-tetrahydrodipicolinate + NADPH + H(+). The protein operates within amino-acid biosynthesis; L-lysine biosynthesis via DAP pathway; (S)-tetrahydrodipicolinate from L-aspartate: step 4/4. Catalyzes the conversion of 4-hydroxy-tetrahydrodipicolinate (HTPA) to tetrahydrodipicolinate. In Caldanaerobacter subterraneus subsp. tengcongensis (strain DSM 15242 / JCM 11007 / NBRC 100824 / MB4) (Thermoanaerobacter tengcongensis), this protein is 4-hydroxy-tetrahydrodipicolinate reductase.